We begin with the raw amino-acid sequence, 352 residues long: Elongation factor Tu, mitochondrial (352 aa).

The region spanning 45–241 is the tr-type G domain; that stretch reads RPHVNVGTIG…AIDTHIPLPH (197 aa). The interval 54-61 is G1; sequence GHVDHGKT. The GTP site is built by Asp-57, Gly-59, Lys-60, Thr-61, and Thr-62. Thr-61 lines the Mg(2+) pocket. The interval 95-99 is G2; the sequence is GITIN. Positions 116-119 are G3; sequence DCPG. GTP-binding residues include Asn-171, Asp-174, Ser-209, Ala-210, and Leu-211. The interval 171–174 is G4; it reads NKAD. Residues 209 to 211 form a G5 region; that stretch reads SAL.

It localises to the mitochondrion. It catalyses the reaction GTP + H2O = GDP + phosphate + H(+). Its function is as follows. GTP hydrolase that promotes the GTP-dependent binding of aminoacyl-tRNA to the A-site of ribosomes during protein biosynthesis. The polypeptide is Elongation factor Tu, mitochondrial (Gallus gallus (Chicken)).